We begin with the raw amino-acid sequence, 424 residues long: UDP-N-acetylglucosamine 1-carboxyvinyltransferase (424 aa).

Position 22–23 (22–23) interacts with phosphoenolpyruvate; the sequence is KN. Residue Arg-93 coordinates UDP-N-acetyl-alpha-D-glucosamine. Cys-117 serves as the catalytic Proton donor. Cys-117 bears the 2-(S-cysteinyl)pyruvic acid O-phosphothioketal mark. Residues 122–126, Asp-307, and Ile-329 each bind UDP-N-acetyl-alpha-D-glucosamine; that span reads RPIDL.

The protein belongs to the EPSP synthase family. MurA subfamily.

The protein localises to the cytoplasm. The enzyme catalyses phosphoenolpyruvate + UDP-N-acetyl-alpha-D-glucosamine = UDP-N-acetyl-3-O-(1-carboxyvinyl)-alpha-D-glucosamine + phosphate. It participates in cell wall biogenesis; peptidoglycan biosynthesis. Cell wall formation. Adds enolpyruvyl to UDP-N-acetylglucosamine. This chain is UDP-N-acetylglucosamine 1-carboxyvinyltransferase, found in Chlorobium phaeovibrioides (strain DSM 265 / 1930) (Prosthecochloris vibrioformis (strain DSM 265)).